Reading from the N-terminus, the 255-residue chain is Probable esterase ATEG_07663 (255 aa).

Catalysis depends on charge relay system residues Ser122, Asp200, and His227.

This sequence belongs to the LovG family.

Probable esterase; part of the cluster B that mediates the biosynthesis of azasperpyranones, members of the azaphilone family that exhibit anti-cancer activities. Azasperpyranones are synthesized by 2 clusters, A and B. Cluster A is responsible for the production of the polyhydric phenol moiety while the azaphilonoid scaffold is produced by the cluster B. The non-reducing polyketide synthase ATEG_03629 produces 5-methyl orsellinic acid, which is then reduced to 5-methyl orsellinic aldehyde by the NRPS-like protein ATEG_03630. 5-methyl orsellinic aldehyde is then first hydroxylated by the FAD-dependent monooxygenase ATEG_03635 and subsequently hydroxylated by the cytochrome P450 monooxygenase ATEG_03631 to produce the unstable polyhydric phenol precursor of azasperpyranones. On the other hand, the polyketide synthase ATEG_07659 is responsible for producing the 3,5-dimethyloctadienone moiety from acetyl-CoA, three malonyl-CoA, and two S-adenosyl methionines (SAM). The 3,5-dimethyloctadienone moiety is then loaded onto the SAT domain of ATEG_07661 and extended with four malonyl-CoA and one SAM, which leads to the formation of 2,4-dihydroxy-6-(5,7-dimethyl-2-oxo-trans-3-trans-5-nonadienyl)-3-methylbenzaldehyde (compound 8) after reductive release and aldol condensation. The FAD-dependent monooxygenase ATEG_07662 is the next enzyme in the biosynthesis sequence and hydroxylates the side chain at the benzylic position of compound 8. In Aspergillus nidulans, afoF, the ortholog of the FAD-dependent oxygenase ATEG_07660, is the key enzyme for the biosynthesis of asperfuranone by catalyzing the hydroxylation at C-8 of to prevent the formation of a six-membered ring hemiacetal intermediate and thus facilitating the formation of a five-membered ring to produce asperfuranone. In Aspergillus terreus, ATEG_07660 is probably not functional, which leads to the formation of the six-membered ring hemiacetal intermediate presperpyranone instead of asperfuranone. Finally, ATEG_03636 is involved in the condensation of the polyhydric phenol moiety produced by cluster A and the perasperpyranone precursor produced by cluster B, to yield azasperpyranone A. Further modifications of azasperpyranone A result in the production of derivatives, including azasperpyranone B to F. This chain is Probable esterase ATEG_07663, found in Aspergillus terreus (strain NIH 2624 / FGSC A1156).